A 706-amino-acid polypeptide reads, in one-letter code: Polyribonucleotide nucleotidyltransferase (706 aa).

Mg(2+) contacts are provided by Asp-486 and Asp-492. The KH domain maps to 553–612 (PRIHTIKISTDKIKDVIGKGGSVIRALTEETGTTIEIEDDGTVKIASTDGEKAKHAIRRI). Residues 622–690 (GRVYQGKVTR…RQGRVRLSIK (69 aa)) enclose the S1 motif domain.

This sequence belongs to the polyribonucleotide nucleotidyltransferase family. In terms of assembly, component of the RNA degradosome, which is a multiprotein complex involved in RNA processing and mRNA degradation. Requires Mg(2+) as cofactor.

The protein resides in the cytoplasm. It carries out the reaction RNA(n+1) + phosphate = RNA(n) + a ribonucleoside 5'-diphosphate. In terms of biological role, involved in mRNA degradation. Catalyzes the phosphorolysis of single-stranded polyribonucleotides processively in the 3'- to 5'-direction. The protein is Polyribonucleotide nucleotidyltransferase of Pectobacterium carotovorum subsp. carotovorum (strain PC1).